The following is a 263-amino-acid chain: Lysine 5,6-aminomutase beta subunit (263 aa).

Residues 120-259 form the B12-binding domain; that stretch reads EVVMVGASTG…TFILKEMVQR (140 aa). Residues 130-136 and His-133 contribute to the adenosylcob(III)alamin site; that span reads TDAHTVG. Lys-144 is subject to N6-(pyridoxal phosphate)lysine. Residues 185 to 192, 219 to 223, and 239 to 244 each bind adenosylcob(III)alamin; these read LVSQTVTQ, IAGGA, and FGPGKY.

It belongs to the KamE family. As to quaternary structure, heterotetramer of 2 alpha and 2 beta subunits. Adenosylcob(III)alamin is required as a cofactor. Pyridoxal 5'-phosphate serves as cofactor.

The catalysed reaction is (3S)-3,6-diaminohexanoate = (3S,5S)-3,5-diaminohexanoate. It carries out the reaction D-lysine = (2R,5S)-2,5-diaminohexanoate. The protein operates within amino-acid degradation; L-lysine degradation via acetate pathway. Its function is as follows. Catalyzes the migration of the L-beta-lysine and D-lysine epsilon amino group to the delta carbon to produce 3,5-diaminohexanoate and 2,5-diaminohexanoate, respectively. This chain is Lysine 5,6-aminomutase beta subunit, found in Fusobacterium nucleatum subsp. nucleatum (strain ATCC 25586 / DSM 15643 / BCRC 10681 / CIP 101130 / JCM 8532 / KCTC 2640 / LMG 13131 / VPI 4355).